Consider the following 917-residue polypeptide: Hexokinase-1 (917 aa).

Residue Met1 is modified to N-acetylmethionine. Residues Met1–Tyr10 are mitochondrial-binding peptide (MBP). 2 Hexokinase domains span residues Asp16–Ala458 and Ala464–Ala906. ATP is bound by residues Arg30 and Asp84–Ser89. The hexokinase small subdomain 1 stretch occupies residues Asp73–Val207. D-glucose 6-phosphate is bound at residue Asp84 to Arg91. D-glucose is bound by residues Ser155, Thr172–Lys173, and Asn208–Asp209. Residues Asn208–Ser447 form a hexokinase large subdomain 1 region. Residues Asp209 and Thr232 each coordinate D-glucose 6-phosphate. D-glucose-binding positions include Asn235, Glu260, and Gln291–Glu294. A Phosphoserine modification is found at Ser337. An ATP-binding site is contributed by Asn345. Asp413–Ser415 contacts D-glucose 6-phosphate. Arg425–Arg426 serves as a coordination point for ATP. D-glucose 6-phosphate contacts are provided by residues Ser449 and Asp532 to Thr536. The segment at Asp521–Val655 is hexokinase small subdomain 2. Residue Asp532–Asn537 coordinates ATP. D-glucose-binding positions include Ser603–Phe604, Thr620–Lys621, and Asn656–Asp657. The hexokinase large subdomain 2 stretch occupies residues Asn656–Asp895. D-glucose 6-phosphate contacts are provided by Asp657 and Thr680. Thr680 serves as a coordination point for ATP. D-glucose contacts are provided by residues Ser682 to Asn683, Glu708, and Glu742. Residues Gly747–Met748, Thr784–Ser788, and Thr863–Leu867 each bind ATP. Residues Asp861–Thr863 and Ser897 each bind D-glucose 6-phosphate.

The protein belongs to the hexokinase family. Monomer. Interacts with RABL2/RABL2A; binds preferentially to GTP-bound RABL2. Interacts with VDAC1. The HK1-VDAC1 complex interacts with ATF2. Interacts (via N-terminal spermatogenic cell-specific region) with PFKM (via C-terminus). Interacts with SMAD5.

It localises to the mitochondrion outer membrane. Its subcellular location is the cytoplasm. It is found in the cytosol. It carries out the reaction a D-hexose + ATP = a D-hexose 6-phosphate + ADP + H(+). The catalysed reaction is D-fructose + ATP = D-fructose 6-phosphate + ADP + H(+). It catalyses the reaction D-glucose + ATP = D-glucose 6-phosphate + ADP + H(+). The enzyme catalyses D-mannose + ATP = D-mannose 6-phosphate + ADP + H(+). It carries out the reaction D-glucosamine + ATP = D-glucosamine 6-phosphate + ADP + H(+). It functions in the pathway carbohydrate metabolism; hexose metabolism. The protein operates within carbohydrate degradation; glycolysis; D-glyceraldehyde 3-phosphate and glycerone phosphate from D-glucose: step 1/4. Its activity is regulated as follows. Hexokinase is an allosteric enzyme inhibited by its product D-glucose 6-phosphate. Hexokinase activity is inhibited by N-acetyl-D-glucosamine. In terms of biological role, catalyzes the phosphorylation of various hexoses, such as D-glucose, D-glucosamine, D-fructose, D-mannose and 2-deoxy-D-glucose, to hexose 6-phosphate (D-glucose 6-phosphate, D-glucosamine 6-phosphate, D-fructose 6-phosphate, D-mannose 6-phosphate and 2-deoxy-D-glucose 6-phosphate, respectively). Does not phosphorylate N-acetyl-D-glucosamine. Mediates the initial step of glycolysis by catalyzing phosphorylation of D-glucose to D-glucose 6-phosphate. Involved in innate immunity and inflammation by acting as a pattern recognition receptor for bacterial peptidoglycan. When released in the cytosol, N-acetyl-D-glucosamine component of bacterial peptidoglycan inhibits the hexokinase activity of HK1 and causes its dissociation from mitochondrial outer membrane, thereby activating the NLRP3 inflammasome. The protein is Hexokinase-1 of Pongo abelii (Sumatran orangutan).